Consider the following 450-residue polypeptide: UDP-N-acetylmuramoylalanine--D-glutamate ligase (450 aa).

119–125 (GSNGKTT) contacts ATP.

It belongs to the MurCDEF family.

Its subcellular location is the cytoplasm. The enzyme catalyses UDP-N-acetyl-alpha-D-muramoyl-L-alanine + D-glutamate + ATP = UDP-N-acetyl-alpha-D-muramoyl-L-alanyl-D-glutamate + ADP + phosphate + H(+). The protein operates within cell wall biogenesis; peptidoglycan biosynthesis. In terms of biological role, cell wall formation. Catalyzes the addition of glutamate to the nucleotide precursor UDP-N-acetylmuramoyl-L-alanine (UMA). The protein is UDP-N-acetylmuramoylalanine--D-glutamate ligase of Bacillus cereus (strain Q1).